We begin with the raw amino-acid sequence, 251 residues long: Adenosylcobinamide-GDP ribazoletransferase (251 aa).

Transmembrane regions (helical) follow at residues 36-56 (LYPF…FVLS), 60-80 (VPIM…TGFL), 110-130 (VGAF…AGIF), 181-201 (EIIL…TLGI), 202-222 (NYLI…LKVK), and 231-251 (DVAG…LGII).

This sequence belongs to the CobS family. The cofactor is Mg(2+).

It localises to the cell membrane. It catalyses the reaction alpha-ribazole + adenosylcob(III)inamide-GDP = adenosylcob(III)alamin + GMP + H(+). It carries out the reaction alpha-ribazole 5'-phosphate + adenosylcob(III)inamide-GDP = adenosylcob(III)alamin 5'-phosphate + GMP + H(+). It functions in the pathway cofactor biosynthesis; adenosylcobalamin biosynthesis; adenosylcobalamin from cob(II)yrinate a,c-diamide: step 7/7. In terms of biological role, joins adenosylcobinamide-GDP and alpha-ribazole to generate adenosylcobalamin (Ado-cobalamin). Also synthesizes adenosylcobalamin 5'-phosphate from adenosylcobinamide-GDP and alpha-ribazole 5'-phosphate. This Clostridium perfringens (strain SM101 / Type A) protein is Adenosylcobinamide-GDP ribazoletransferase.